We begin with the raw amino-acid sequence, 171 residues long: 3-hydroxydecanoyl-[acyl-carrier-protein] dehydratase (171 aa).

Histidine 71 is an active-site residue.

The protein belongs to the thioester dehydratase family. FabA subfamily. In terms of assembly, homodimer.

It localises to the cytoplasm. It catalyses the reaction a (3R)-hydroxyacyl-[ACP] = a (2E)-enoyl-[ACP] + H2O. The catalysed reaction is (3R)-hydroxydecanoyl-[ACP] = (2E)-decenoyl-[ACP] + H2O. It carries out the reaction (2E)-decenoyl-[ACP] = (3Z)-decenoyl-[ACP]. It participates in lipid metabolism; fatty acid biosynthesis. In terms of biological role, necessary for the introduction of cis unsaturation into fatty acids. Catalyzes the dehydration of (3R)-3-hydroxydecanoyl-ACP to E-(2)-decenoyl-ACP and then its isomerization to Z-(3)-decenoyl-ACP. Can catalyze the dehydratase reaction for beta-hydroxyacyl-ACPs with saturated chain lengths up to 16:0, being most active on intermediate chain length. This is 3-hydroxydecanoyl-[acyl-carrier-protein] dehydratase from Agrobacterium fabrum (strain C58 / ATCC 33970) (Agrobacterium tumefaciens (strain C58)).